The chain runs to 66 residues: Large ribosomal subunit protein bL35 (66 aa).

Belongs to the bacterial ribosomal protein bL35 family.

The sequence is that of Large ribosomal subunit protein bL35 from Jannaschia sp. (strain CCS1).